The primary structure comprises 142 residues: Large ribosomal subunit protein uL11 (142 aa).

Belongs to the universal ribosomal protein uL11 family. Part of the ribosomal stalk of the 50S ribosomal subunit. Interacts with L10 and the large rRNA to form the base of the stalk. L10 forms an elongated spine to which L12 dimers bind in a sequential fashion forming a multimeric L10(L12)X complex. One or more lysine residues are methylated.

Functionally, forms part of the ribosomal stalk which helps the ribosome interact with GTP-bound translation factors. The sequence is that of Large ribosomal subunit protein uL11 from Acidithiobacillus ferrooxidans (strain ATCC 23270 / DSM 14882 / CIP 104768 / NCIMB 8455) (Ferrobacillus ferrooxidans (strain ATCC 23270)).